An 874-amino-acid chain; its full sequence is DNA primase (874 aa).

Residues 786–824 (CLRHTHRASSKNVRVFLVLYYTSQAITVTFMSQCFAGRC) form a CHC2-type zinc finger. Residues 848–857 (ASQDSTTSQL) are compositionally biased toward polar residues. A disordered region spans residues 848 to 874 (ASQDSTTSQLARRRDRQDGSFSETLPN).

The protein belongs to the herpesviridae DNA primase family. As to quaternary structure, associates with the helicase and the primase-associated factor to form the helicase-primase factor.

It localises to the host nucleus. Essential component of the helicase/primase complex. Unwinds the DNA at the replication forks and generates single-stranded DNA for both leading and lagging strand synthesis. The primase initiates primer synthesis and thereby produces large amount of short RNA primers on the lagging strand that the polymerase elongates using dNTPs. The polypeptide is DNA primase (Epstein-Barr virus (strain B95-8) (HHV-4)).